We begin with the raw amino-acid sequence, 199 residues long: Recombination protein RecR (199 aa).

The C4-type zinc-finger motif lies at 57–72 (CTVCGHITDIDPCAIC). A Toprim domain is found at 80 to 176 (TVVCVVQDSR…RVTRLAHGLP (97 aa)).

Belongs to the RecR family.

May play a role in DNA repair. It seems to be involved in an RecBC-independent recombinational process of DNA repair. It may act with RecF and RecO. The protein is Recombination protein RecR of Exiguobacterium sp. (strain ATCC BAA-1283 / AT1b).